Here is an 85-residue protein sequence, read N- to C-terminus: COMM domain-containing protein 6 (85 aa).

Met-1 bears the N-acetylmethionine mark. Positions 18-85 constitute a COMM domain; that stretch reads QLIDFEWKLG…KEIAAIIETV (68 aa).

Belongs to the COMM domain-containing protein 6 family. As to quaternary structure, component of the commander complex consisting of the CCC subcomplex and the retriever subcomplex. Component of the CCC (COMMD/CCDC22/CCDC93) subcomplex consisting of COMMD1, COMMD2, COMMD3, COMMD4, COMMD5, COMMD6, COMMD7, COMMD8, COMMD9, COMMD10, CCDC22 and CCDC93; within the complex forms a heterodimer with COMMD1. May form a homodimer with isoform 1. Interacts with RELA, RELB, NFKB1/p105. Does not interact with NFKBIB. Interacts with CCDC22, CCDC93, SCNN1B, CUL4A.

The protein localises to the nucleus. It is found in the cytoplasm. Its function is as follows. Scaffold protein in the commander complex that is essential for endosomal recycling of transmembrane cargos; the commander complex is composed of the CCC subcomplex and the retriever subcomplex. May modulate activity of cullin-RING E3 ubiquitin ligase (CRL) complexes. Down-regulates activation of NF-kappa-B. Inhibits TNF-induced NFKB1 activation. This chain is COMM domain-containing protein 6 (COMMD6), found in Bos taurus (Bovine).